The sequence spans 180 residues: Large ribosomal subunit protein uL5 (180 aa).

This sequence belongs to the universal ribosomal protein uL5 family. As to quaternary structure, part of the 50S ribosomal subunit; part of the 5S rRNA/L5/L18/L25 subcomplex. Contacts the 5S rRNA and the P site tRNA. Forms a bridge to the 30S subunit in the 70S ribosome.

In terms of biological role, this is one of the proteins that bind and probably mediate the attachment of the 5S RNA into the large ribosomal subunit, where it forms part of the central protuberance. In the 70S ribosome it contacts protein S13 of the 30S subunit (bridge B1b), connecting the 2 subunits; this bridge is implicated in subunit movement. Contacts the P site tRNA; the 5S rRNA and some of its associated proteins might help stabilize positioning of ribosome-bound tRNAs. This Cupriavidus necator (strain ATCC 17699 / DSM 428 / KCTC 22496 / NCIMB 10442 / H16 / Stanier 337) (Ralstonia eutropha) protein is Large ribosomal subunit protein uL5.